We begin with the raw amino-acid sequence, 447 residues long: Asparagine--tRNA ligase (447 aa).

This sequence belongs to the class-II aminoacyl-tRNA synthetase family. As to quaternary structure, homodimer.

It localises to the cytoplasm. It catalyses the reaction tRNA(Asn) + L-asparagine + ATP = L-asparaginyl-tRNA(Asn) + AMP + diphosphate + H(+). In Streptococcus pneumoniae serotype 4 (strain ATCC BAA-334 / TIGR4), this protein is Asparagine--tRNA ligase.